The chain runs to 84 residues: Small ribosomal subunit protein bS16 (84 aa).

This sequence belongs to the bacterial ribosomal protein bS16 family.

The sequence is that of Small ribosomal subunit protein bS16 from Paraburkholderia phymatum (strain DSM 17167 / CIP 108236 / LMG 21445 / STM815) (Burkholderia phymatum).